The chain runs to 136 residues: Peptide methionine sulfoxide reductase MsrB (136 aa).

The 128-residue stretch at 9-136 (DAEWKALLAE…NSASLDFKKK (128 aa)) folds into the MsrB domain. C53, C56, C102, and C105 together coordinate Zn(2+). The active-site Nucleophile is the C125.

It belongs to the MsrB Met sulfoxide reductase family. Zn(2+) is required as a cofactor.

It catalyses the reaction L-methionyl-[protein] + [thioredoxin]-disulfide + H2O = L-methionyl-(R)-S-oxide-[protein] + [thioredoxin]-dithiol. This is Peptide methionine sulfoxide reductase MsrB from Variovorax paradoxus (strain S110).